The following is a 428-amino-acid chain: C4-dicarboxylate transport protein (428 aa).

Helical transmembrane passes span 4-24 (SLFKSLYFQVLTAIAIGILLG), 44-64 (LIKMIIAPVIFCTVVTGIAGM), 76-96 (VALLYFEIVSTIALIIGLIIV), 142-162 (IGAFASGNILQVLLFAVLFGF), 184-204 (VIFGIINMIMRLAPIGAFGAM), 222-242 (LIICFYITCILFVVVVLGTIA), 289-309 (VVGLVIPTGYSFNLDGTSIYL), 326-346 (IFHQITLLVVLLLSSKGAAGV), and 352-372 (IVLAATISAVGHLPVAGLALI).

This sequence belongs to the dicarboxylate/amino acid:cation symporter (DAACS) (TC 2.A.23) family.

The protein localises to the cell inner membrane. Functionally, responsible for the transport of dicarboxylates such as succinate, fumarate, and malate from the periplasm across the membrane. This chain is C4-dicarboxylate transport protein, found in Salmonella arizonae (strain ATCC BAA-731 / CDC346-86 / RSK2980).